We begin with the raw amino-acid sequence, 347 residues long: Sulfate/thiosulfate import ATP-binding protein CysA 1 (347 aa).

In terms of domain architecture, ABC transporter spans 3–237 (VRVESLRKEF…PVSPFVYGFI (235 aa)). 35-42 (GPSGSGKT) is an ATP binding site.

The protein belongs to the ABC transporter superfamily. Sulfate/tungstate importer (TC 3.A.1.6) family. The complex is composed of two ATP-binding proteins (CysA), two transmembrane proteins (CysT and CysW) and a solute-binding protein (CysP).

The protein localises to the cell inner membrane. The catalysed reaction is sulfate(out) + ATP + H2O = sulfate(in) + ADP + phosphate + H(+). It catalyses the reaction thiosulfate(out) + ATP + H2O = thiosulfate(in) + ADP + phosphate + H(+). Functionally, part of the ABC transporter complex CysAWTP involved in sulfate/thiosulfate import. Responsible for energy coupling to the transport system. The sequence is that of Sulfate/thiosulfate import ATP-binding protein CysA 1 from Rhizobium meliloti (strain 1021) (Ensifer meliloti).